Here is a 183-residue protein sequence, read N- to C-terminus: Ribosome rescue factor SmrB (183 aa).

The 76-residue stretch at 98 to 173 folds into the Smr domain; it reads LDLHGLTQMQ…GDAALLVLIE (76 aa).

This sequence belongs to the SmrB family. Associates with collided ribosomes, but not with correctly translating polysomes.

Acts as a ribosome collision sensor. Detects stalled/collided disomes (pairs of ribosomes where the leading ribosome is stalled and a second ribosome has collided with it) and endonucleolytically cleaves mRNA at the 5' boundary of the stalled ribosome. Stalled/collided disomes form a new interface (primarily via the 30S subunits) that binds SmrB. Cleaved mRNA becomes available for tmRNA ligation, leading to ribosomal subunit dissociation and rescue of stalled ribosomes. The protein is Ribosome rescue factor SmrB of Enterobacter sp. (strain 638).